The primary structure comprises 55 residues: Spermatid nuclear transition protein 1 (55 aa).

A compositionally biased stretch (basic residues) spans 1 to 42 (MSTSRKLKTHGMRRGKNRAPHKGVKRGGSKRKYRKSVLKSRK). Residues 1 to 55 (MSTSRKLKTHGMRRGKNRAPHKGVKRGGSKRKYRKSVLKSRKRGDDASRNYRSHL) are disordered. 2 positions are modified to phosphoserine: serine 36 and serine 40.

It belongs to the nuclear transition protein 1 family. Testis-specific.

The protein localises to the nucleus. It localises to the chromosome. In terms of biological role, plays a key role in the replacement of histones to protamine in the elongating spermatids of mammals. In condensing spermatids, loaded onto the nucleosomes, where it promotes the recruitment and processing of protamines, which are responsible for histone eviction. The histone H2AB1-H2BC1/TH2B dimer is required for loading of TNP1 onto chromatin. This chain is Spermatid nuclear transition protein 1, found in Mus musculus (Mouse).